A 43-amino-acid polypeptide reads, in one-letter code: Iota-conotoxin-like Fi11.6 (43 aa).

Intrachain disulfides connect Cys2–Cys16, Cys9–Cys19, Cys15–Cys24, and Cys18–Cys35. Pro8 carries the post-translational modification 4-hydroxyproline. The residue at position 26 (Pro26) is a 4-hydroxyproline. Position 30 is a 6'-bromotryptophan (Trp30). Phe41 is modified (D-phenylalanine).

It belongs to the conotoxin I1 superfamily. Expressed by the venom duct.

Its subcellular location is the secreted. In terms of biological role, iota-conotoxins bind to voltage-gated sodium channels (Nav) and act as agonists by shifting the voltage-dependence of activation to more hyperpolarized levels. Produces general excitatory symptoms. This chain is Iota-conotoxin-like Fi11.6, found in Conus figulinus (Fig cone).